Consider the following 429-residue polypeptide: 3-phosphoshikimate 1-carboxyvinyltransferase (429 aa).

Positions 11, 12, and 16 each coordinate 3-phosphoshikimate. K11 provides a ligand contact to phosphoenolpyruvate. The phosphoenolpyruvate site is built by G82 and R110. 4 residues coordinate 3-phosphoshikimate: S155, Q157, D302, and K329. Q157 is a phosphoenolpyruvate binding site. Catalysis depends on D302, which acts as the Proton acceptor. R333 and R385 together coordinate phosphoenolpyruvate.

Belongs to the EPSP synthase family. Monomer.

The protein resides in the cytoplasm. It carries out the reaction 3-phosphoshikimate + phosphoenolpyruvate = 5-O-(1-carboxyvinyl)-3-phosphoshikimate + phosphate. It functions in the pathway metabolic intermediate biosynthesis; chorismate biosynthesis; chorismate from D-erythrose 4-phosphate and phosphoenolpyruvate: step 6/7. In terms of biological role, catalyzes the transfer of the enolpyruvyl moiety of phosphoenolpyruvate (PEP) to the 5-hydroxyl of shikimate-3-phosphate (S3P) to produce enolpyruvyl shikimate-3-phosphate and inorganic phosphate. The sequence is that of 3-phosphoshikimate 1-carboxyvinyltransferase from Helicobacter acinonychis (strain Sheeba).